Reading from the N-terminus, the 403-residue chain is Phosphoglycerate kinase (403 aa).

Residues 21–23 (DFN), Arg-36, 59–62 (HLGR), Arg-119, and Arg-154 each bind substrate. ATP is bound by residues Lys-207, Gly-299, Glu-330, and 357-360 (GGDA).

The protein belongs to the phosphoglycerate kinase family. As to quaternary structure, monomer.

It is found in the cytoplasm. It carries out the reaction (2R)-3-phosphoglycerate + ATP = (2R)-3-phospho-glyceroyl phosphate + ADP. It functions in the pathway carbohydrate degradation; glycolysis; pyruvate from D-glyceraldehyde 3-phosphate: step 2/5. This is Phosphoglycerate kinase from Chlamydia trachomatis serovar A (strain ATCC VR-571B / DSM 19440 / HAR-13).